The primary structure comprises 410 residues: Multifunctional CCA protein (410 aa).

2 residues coordinate ATP: G8 and R11. CTP contacts are provided by G8 and R11. Mg(2+) is bound by residues E21 and D23. ATP contacts are provided by R91, R137, and R140. Residues R91, R137, and R140 each coordinate CTP. In terms of domain architecture, HD spans T228 to W329.

It belongs to the tRNA nucleotidyltransferase/poly(A) polymerase family. Bacterial CCA-adding enzyme type 1 subfamily. As to quaternary structure, monomer. Can also form homodimers and oligomers. Mg(2+) serves as cofactor. The cofactor is Ni(2+).

The enzyme catalyses a tRNA precursor + 2 CTP + ATP = a tRNA with a 3' CCA end + 3 diphosphate. The catalysed reaction is a tRNA with a 3' CCA end + 2 CTP + ATP = a tRNA with a 3' CCACCA end + 3 diphosphate. Its function is as follows. Catalyzes the addition and repair of the essential 3'-terminal CCA sequence in tRNAs without using a nucleic acid template. Adds these three nucleotides in the order of C, C, and A to the tRNA nucleotide-73, using CTP and ATP as substrates and producing inorganic pyrophosphate. tRNA 3'-terminal CCA addition is required both for tRNA processing and repair. Also involved in tRNA surveillance by mediating tandem CCA addition to generate a CCACCA at the 3' terminus of unstable tRNAs. While stable tRNAs receive only 3'-terminal CCA, unstable tRNAs are marked with CCACCA and rapidly degraded. The sequence is that of Multifunctional CCA protein from Tolumonas auensis (strain DSM 9187 / NBRC 110442 / TA 4).